The chain runs to 156 residues: S-ribosylhomocysteine lyase (156 aa).

The Fe cation site is built by His-56, His-60, and Cys-123.

The protein belongs to the LuxS family. In terms of assembly, homodimer. It depends on Fe cation as a cofactor.

The enzyme catalyses S-(5-deoxy-D-ribos-5-yl)-L-homocysteine = (S)-4,5-dihydroxypentane-2,3-dione + L-homocysteine. Involved in the synthesis of autoinducer 2 (AI-2) which is secreted by bacteria and is used to communicate both the cell density and the metabolic potential of the environment. The regulation of gene expression in response to changes in cell density is called quorum sensing. Catalyzes the transformation of S-ribosylhomocysteine (RHC) to homocysteine (HC) and 4,5-dihydroxy-2,3-pentadione (DPD). This chain is S-ribosylhomocysteine lyase, found in Staphylococcus epidermidis (strain ATCC 35984 / DSM 28319 / BCRC 17069 / CCUG 31568 / BM 3577 / RP62A).